Here is a 163-residue protein sequence, read N- to C-terminus: Nucleotide-binding protein C8J_0350 (163 aa).

The protein belongs to the YajQ family.

Functionally, nucleotide-binding protein. This chain is Nucleotide-binding protein C8J_0350, found in Campylobacter jejuni subsp. jejuni serotype O:6 (strain 81116 / NCTC 11828).